The chain runs to 694 residues: Transcription activator of gluconeogenesis PTRG_06536 (694 aa).

Residues 1 to 57 (MTTPDAEDASPSPEYRSDQDDDMAAEQTTDRQSGDASPTQKPANGKPNAKDPLRPRR) form a disordered region. The zn(2)-C6 fungal-type DNA-binding region spans 64–92 (CFACQRAHLTCGDERPCGRCIKRGLQDHC). Disordered regions lie at residues 175–216 (FSNQ…FGPL), 289–369 (AMAF…GDNP), 384–420 (AQRS…RDTK), and 539–569 (VNLG…SEGA). Residues 193–204 (SVQNAGAPSTMS) show a composition bias toward polar residues. Residues 205-214 (QGQQGMQQFG) show a composition bias toward low complexity. Polar residues predominate over residues 302 to 324 (WQETQSRQGSMHVHTPNNTSGSG). The segment covering 349-363 (ATHSTASPASTDAST) has biased composition (low complexity). A compositionally biased stretch (polar residues) spans 392 to 408 (RPQQENRPPTTALQSIH). Residues 485–559 (LQRHLMTLQE…SDTSTQNTTP (75 aa)) enclose the PAS domain.

Belongs to the ERT1/acuK family.

The protein localises to the nucleus. In terms of biological role, transcription factor which regulates nonfermentable carbon utilization. Activator of gluconeogenetic genes. The chain is Transcription activator of gluconeogenesis PTRG_06536 from Pyrenophora tritici-repentis (strain Pt-1C-BFP) (Wheat tan spot fungus).